The sequence spans 881 residues: MGCRPRGPRGQAERAGSRCQYHWPMTNRSRSFNVPDKPSLDGIEAKWVDVWDESGVYHFDRSKSREEIFAIDTPPPTVSGSLHIGHVFSYTHTDTVARFQRMNGKSVFYPMGWDDNGLPTERRVQNYYGVRCDPSIPYDPDFTPPEKPDPKNQVPISRRNFIELCERLTVEDEKVFESIWRRLGLSVDWRYTYATIDDKSRAVAQRAFLRNLARGEAYMAEAPTLWDVTFRTAVAQAELEDRERPGAYHKVAFHRDGGDPIIIATTRPELLPACVALVAHPDDERYQSLFGTTVRSPLFGVEVPVVAHRLADPEKGTGIAMICTFGDVTDVTWWRELKLPTRAIIGWDGRIVADPPEGLDSEEGRAAYAKLAGATVHTARQRIVEMLRESGDLIGEPEKITHPVKFFEKGDKPLEIVTTRQWYIRNGGRDPELREALLKRGQELDWYPEHMRTRFEHWVGGLNGDWLISRQRFFGVPFPVWYPLDDKGNPIYDSPILPDESQLPVDPSSQAPEGYTEDQRGKPGGFIGDPDVMDTWATSSLTPQIAGGWESDPDLFERVFPMDLRPQGQDIIRTWLFSTVVRSHFEHDCLPWKKAAISGWILDPDRKKMSKSKGNVVTPLSMLEKYSSDAVRYWAASGRLGTDTALDEKQMKIGRRLAIKILNASKFALSVAGEDTVADPAAVTEPLDRSMLAVLAEVVQDATAAFHEYDHTRALERTERFFWNLCDDYLELVKARAYDPESREGASARAALLIALSVLHRLFAPFLPFVTEEVWSWWQDGSVHVAKWPSVEEFRAAAEAGDPAVLAATSEVLHTVRKAKSEAKLSMRAEVERVTVHGKQAEQARLCRDDLAAAGRVTTLVFETTDDAELRVDVELAPAEK.

A 'HIGH' region motif is present at residues 76–86 (PTVSGSLHIGH). A disordered region spans residues 493–526 (DSPILPDESQLPVDPSSQAPEGYTEDQRGKPGGF). Residues 608 to 612 (KMSKS) carry the 'KMSKS' region motif. Residue lysine 611 coordinates ATP.

It belongs to the class-I aminoacyl-tRNA synthetase family. ValS type 2 subfamily. Monomer.

The protein localises to the cytoplasm. It carries out the reaction tRNA(Val) + L-valine + ATP = L-valyl-tRNA(Val) + AMP + diphosphate. In terms of biological role, catalyzes the attachment of valine to tRNA(Val). As ValRS can inadvertently accommodate and process structurally similar amino acids such as threonine, to avoid such errors, it has a 'posttransfer' editing activity that hydrolyzes mischarged Thr-tRNA(Val) in a tRNA-dependent manner. This Thermobifida fusca (strain YX) protein is Valine--tRNA ligase.